The sequence spans 579 residues: Alpha-glucosidase (579 aa).

The Nucleophile role is filled by D212. E269 acts as the Proton donor in catalysis.

Belongs to the glycosyl hydrolase 13 family.

The enzyme catalyses Hydrolysis of terminal, non-reducing (1-&gt;4)-linked alpha-D-glucose residues with release of alpha-D-glucose.. The chain is Alpha-glucosidase (mal1) from Schizosaccharomyces pombe (strain 972 / ATCC 24843) (Fission yeast).